We begin with the raw amino-acid sequence, 147 residues long: D-aminoacyl-tRNA deacylase (147 aa).

Residues 136–137 (GP) carry the Gly-cisPro motif, important for rejection of L-amino acids motif.

Belongs to the DTD family. As to quaternary structure, homodimer.

It is found in the cytoplasm. It carries out the reaction glycyl-tRNA(Ala) + H2O = tRNA(Ala) + glycine + H(+). It catalyses the reaction a D-aminoacyl-tRNA + H2O = a tRNA + a D-alpha-amino acid + H(+). In terms of biological role, an aminoacyl-tRNA editing enzyme that deacylates mischarged D-aminoacyl-tRNAs. Also deacylates mischarged glycyl-tRNA(Ala), protecting cells against glycine mischarging by AlaRS. Acts via tRNA-based rather than protein-based catalysis; rejects L-amino acids rather than detecting D-amino acids in the active site. By recycling D-aminoacyl-tRNA to D-amino acids and free tRNA molecules, this enzyme counteracts the toxicity associated with the formation of D-aminoacyl-tRNA entities in vivo and helps enforce protein L-homochirality. This Streptococcus pneumoniae serotype 2 (strain D39 / NCTC 7466) protein is D-aminoacyl-tRNA deacylase.